A 439-amino-acid chain; its full sequence is MRCSLRMQLLLLLGLCVFISRIQGQLIGGEEDEEDEEEEEEEEESVEDETPEDRLQRKNIKQDSTLSVDKLIAKYGYESEVHHVTTEDGYILTMHRIRKQGAPPFLLQHGLVDSSAGFVVMGPNVSLAYLLADHNYDVWLGNARGNRYSRNHTTLDPDESKFWDFSWHEIGMYDLPAMIDHVLKVTGFPKLHYAGHSQGCTSFFVMCSMRPAYNDKVVSMQALAPAVYAKETEDHPYIRAISLYFNSLVGSSIREMFNGEFRFLCRMTEETERLCIEAVFGIVGRNWNEFNRKMFPVILGHYPAGVAAKQVKHFIQIIKSGRFAPYSYSSNKNMQLYRDHLPPRYNLSLVTVPTFVYYSTNDLLCHPKDVESMCDDLGNVTGKYLVPQKEFNHMDFLWAIDVRKMLYRRMLQVLGKVPEGSPEEANRSRREIRGKFIRS.

The N-terminal stretch at 1–24 is a signal peptide; it reads MRCSLRMQLLLLLGLCVFISRIQG. Residues 28–60 are disordered; it reads GGEEDEEDEEEEEEEEESVEDETPEDRLQRKNI. The span at 29–51 shows a compositional bias: acidic residues; it reads GEEDEEDEEEEEEEEESVEDETP. 2 N-linked (GlcNAc...) asparagine glycosylation sites follow: Asn-124 and Asn-151. Ser-197 (charge relay system) is an active-site residue. Asn-346 and Asn-379 each carry an N-linked (GlcNAc...) asparagine glycan. His-393 serves as the catalytic Charge relay system. Asn-426 carries an N-linked (GlcNAc...) asparagine glycan.

Belongs to the AB hydrolase superfamily. Lipase family. In terms of tissue distribution, in 14 hours embryos expression is seen in the foregut/midgut boundary.

Its subcellular location is the secreted. Its function is as follows. Could be a digestive enzyme. The polypeptide is Lipase 1 (Lip1) (Drosophila melanogaster (Fruit fly)).